Here is a 239-residue protein sequence, read N- to C-terminus: DNA repair protein RecO (239 aa).

Belongs to the RecO family.

Its function is as follows. Involved in DNA repair and RecF pathway recombination. This is DNA repair protein RecO from Cereibacter sphaeroides (strain ATCC 17029 / ATH 2.4.9) (Rhodobacter sphaeroides).